The chain runs to 452 residues: Ribosome biogenesis protein YTM1 (452 aa).

The interval 17-98 is ubiquitin-like (UBL) domain; sequence IVSQPVVFTT…EETLEIEYIE (82 aa). WD repeat units lie at residues 110–148, 150–195, and 208–247; these read PHEDWVSSVSCQLPRYFLTASYDGNLRAFDLSKNLTASI, AHPA…NPMA, and LHTAPVSSISANAAGTHVLTASWDGLIGYWDATVPSTDEV. The interval 245–269 is disordered; it reads DEVPEPALNERDRSKKRRRVEEGEV. Positions 252 to 269 are enriched in basic and acidic residues; it reads LNERDRSKKRRRVEEGEV. WD repeat units follow at residues 282 to 322, 325 to 364, 371 to 411, and 418 to 452; these read SHTA…CSHT, ASEKPFLDMALTPDGNSALATSTDRSMTLYDLRSSTTILT, MHPS…SAMA, and GSGQKVLSVDWKRGIVGVGGERGLEMWKVGEEQKV.

This sequence belongs to the WD repeat WDR12/YTM1 family. In terms of assembly, component of the NOP7 complex, composed of ERB1, NOP7 and YTM1. The complex is held together by ERB1, which interacts with NOP7 via its N-terminal domain and with YTM1 via a high-affinity interaction between the seven-bladed beta-propeller domains of the 2 proteins. The NOP7 complex associates with the 66S pre-ribosome. Interacts (via UBL domain) with MDN1 (via VWFA/MIDAS domain).

The protein localises to the nucleus. It is found in the nucleolus. Its subcellular location is the nucleoplasm. Component of the NOP7 complex, which is required for maturation of the 25S and 5.8S ribosomal RNAs and formation of the 60S ribosome. The protein is Ribosome biogenesis protein YTM1 of Laccaria bicolor (strain S238N-H82 / ATCC MYA-4686) (Bicoloured deceiver).